A 161-amino-acid polypeptide reads, in one-letter code: MSERDAIRAFSHMLETIFVRMRAEGTGSQTDAMQRWLDLYNVGSLPIDKKSYKALRLMDRETTDQQKEDATCAICLDNLQNNVDIPEDHVIKEELKIDPTTFGTTVIVMPCKHRFHYFCLTLWLEAQQTCPTCRQKVKTDKEVEEEERQRNLEELHDSMYG.

An RING-type zinc finger spans residues 72 to 134 (CAICLDNLQN…EAQQTCPTCR (63 aa)). The tract at residues 140 to 161 (DKEVEEEERQRNLEELHDSMYG) is disordered.

This is an uncharacterized protein from Caenorhabditis elegans.